The following is a 188-amino-acid chain: dTTP/UTP pyrophosphatase (188 aa).

The active-site Proton acceptor is the Asp70.

Belongs to the Maf family. YhdE subfamily. A divalent metal cation is required as a cofactor.

Its subcellular location is the cytoplasm. It carries out the reaction dTTP + H2O = dTMP + diphosphate + H(+). The catalysed reaction is UTP + H2O = UMP + diphosphate + H(+). Nucleoside triphosphate pyrophosphatase that hydrolyzes dTTP and UTP. May have a dual role in cell division arrest and in preventing the incorporation of modified nucleotides into cellular nucleic acids. This chain is dTTP/UTP pyrophosphatase, found in Clostridium botulinum (strain Eklund 17B / Type B).